A 253-amino-acid polypeptide reads, in one-letter code: Putative tyrosine-protein phosphatase OCA1 (253 aa).

The segment covering Met1 to Gln21 has biased composition (basic and acidic residues). Positions Met1 to Pro84 are disordered. Positions Ser27–Ala65 are enriched in polar residues. The Tyrosine-protein phosphatase domain occupies Asn93–Glu249. Cys186 functions as the Phosphocysteine intermediate in the catalytic mechanism.

The protein belongs to the protein-tyrosine phosphatase family.

It localises to the cytoplasm. The catalysed reaction is O-phospho-L-tyrosyl-[protein] + H2O = L-tyrosyl-[protein] + phosphate. Functionally, putative tyrosine-protein phosphatase required for protection against superoxide stress. The sequence is that of Putative tyrosine-protein phosphatase OCA1 (OCA1) from Yarrowia lipolytica (strain CLIB 122 / E 150) (Yeast).